A 763-amino-acid chain; its full sequence is Dual specificity tyrosine-phosphorylation-regulated kinase 1A (763 aa).

Ser14 is modified (phosphoserine). The tract at residues 33 to 56 (QMPHSHQYSDRRQPNISDQQVSAL) is disordered. The segment covering 46–56 (PNISDQQVSAL) has biased composition (polar residues). A Phosphotyrosine; by autocatalysis modification is found at Tyr111. Positions 115-136 (KKRRHQQGQGDDSSHKKERKVY) are disordered. The Bipartite nuclear localization signal motif lies at 117-134 (RRHQQGQGDDSSHKKERK). Tyr140 is modified (phosphotyrosine; by autocatalysis). Phosphotyrosine is present on Tyr145. Tyr159 is modified (phosphotyrosine; by autocatalysis). Residues 159–479 (YEIDSLIGKG…PYYALQHSFF (321 aa)) form the Protein kinase domain. Position 165–173 (165–173 (IGKGSFGQV)) interacts with ATP. Phosphotyrosine; by autocatalysis is present on Tyr177. Lys188 is a binding site for ATP. Tyr219 carries the post-translational modification Phosphotyrosine; by autocatalysis. 238–241 (FEML) provides a ligand contact to ATP. Asp287 functions as the Proton acceptor in the catalytic mechanism. Position 310 is a phosphoserine; by autocatalysis (Ser310). 2 positions are modified to phosphotyrosine; by autocatalysis: Tyr319 and Tyr321. Thr402 carries the post-translational modification Phosphothreonine; by autocatalysis. The tract at residues 408–442 (TKDGKREYKPPGTRKLHNILGVETGGPGGRRAGES) is disordered. Tyr449 is subject to Phosphotyrosine; by autocatalysis. Residues 485-501 (EGTNTSNSVSTSPAMEQ) are compositionally biased toward polar residues. Disordered stretches follow at residues 485–540 (EGTN…HSGG), 596–679 (NALH…GNQA), and 744–763 (DREE…VASS). Residues 502–525 (SQSSGTTSSTSSSSGGSSGTSNSG) are compositionally biased toward low complexity. Phosphoserine occurs at positions 529 and 538. Residues 595–625 (QNALHHHHGNSSHHHHHHHHHHHHHGQQALG) are histidine-rich domain (HRD). The span at 598–620 (LHHHHGNSSHHHHHHHHHHHHHG) shows a compositional bias: basic residues. Residues 634-645 (NSPTNSSSTQDS) are compositionally biased toward polar residues. The span at 654–672 (SMTSLSSSTTSSSTSSSST) shows a compositional bias: low complexity. Ser748 and Ser758 each carry phosphoserine. Residues 754 to 763 (CVQQSPVASS) are compositionally biased toward polar residues.

The protein belongs to the protein kinase superfamily. CMGC Ser/Thr protein kinase family. MNB/DYRK subfamily. Interacts with RAD54L2/ARIP4. Interacts with CRY2. Interacts with RANBP9. Interacts with WDR68. Interacts with SIRT1. Can also autophosphorylate on serine and threonine residues (in vitro). Autophosphorylated on numerous tyrosine residues. Detected in brain (at protein level). Ubiquitous.

The protein resides in the nucleus speckle. It carries out the reaction L-seryl-[protein] + ATP = O-phospho-L-seryl-[protein] + ADP + H(+). It catalyses the reaction L-threonyl-[protein] + ATP = O-phospho-L-threonyl-[protein] + ADP + H(+). The catalysed reaction is L-tyrosyl-[protein] + ATP = O-phospho-L-tyrosyl-[protein] + ADP + H(+). The enzyme catalyses [DNA-directed RNA polymerase] + ATP = phospho-[DNA-directed RNA polymerase] + ADP + H(+). With respect to regulation, inhibited by RANBP9. Inhibited by harmine, leucettamine B and leucettine L41. Dual-specificity kinase which possesses both serine/threonine and tyrosine kinase activities. Exhibits a substrate preference for proline at position P+1 and arginine at position P-3. Plays an important role in double-strand breaks (DSBs) repair following DNA damage. Mechanistically, phosphorylates RNF169 and increases its ability to block accumulation of TP53BP1 at the DSB sites thereby promoting homologous recombination repair (HRR). Also acts as a positive regulator of transcription by acting as a CTD kinase that mediates phosphorylation of the CTD (C-terminal domain) of the large subunit of RNA polymerase II (RNAP II) POLR2A. May play a role in a signaling pathway regulating nuclear functions of cell proliferation. Modulates alternative splicing by phosphorylating the splice factor SRSF6. Has pro-survival function and negatively regulates the apoptotic process. Promotes cell survival upon genotoxic stress through phosphorylation of SIRT1. This in turn inhibits p53/TP53 activity and apoptosis. Phosphorylates SEPTIN4, SEPTIN5 and SF3B1 at 'Thr-434'. The sequence is that of Dual specificity tyrosine-phosphorylation-regulated kinase 1A (Dyrk1a) from Rattus norvegicus (Rat).